A 500-amino-acid chain; its full sequence is L-arabinose isomerase (500 aa).

Mn(2+) contacts are provided by glutamate 306, glutamate 333, histidine 350, and histidine 450.

This sequence belongs to the arabinose isomerase family. Homohexamer. The cofactor is Mn(2+).

It catalyses the reaction beta-L-arabinopyranose = L-ribulose. Its pathway is carbohydrate degradation; L-arabinose degradation via L-ribulose; D-xylulose 5-phosphate from L-arabinose (bacterial route): step 1/3. Catalyzes the conversion of L-arabinose to L-ribulose. This Escherichia coli (strain 55989 / EAEC) protein is L-arabinose isomerase.